The primary structure comprises 234 residues: Large ribosomal subunit protein uL1 (234 aa).

It belongs to the universal ribosomal protein uL1 family. Part of the 50S ribosomal subunit.

Its function is as follows. Binds directly to 23S rRNA. The L1 stalk is quite mobile in the ribosome, and is involved in E site tRNA release. Protein L1 is also a translational repressor protein, it controls the translation of the L11 operon by binding to its mRNA. The sequence is that of Large ribosomal subunit protein uL1 from Vibrio atlanticus (strain LGP32) (Vibrio splendidus (strain Mel32)).